Here is a 426-residue protein sequence, read N- to C-terminus: tRNA (guanine(37)-N(1))-methyltransferase (426 aa).

S-adenosyl-L-methionine is bound by residues His203, 242 to 243, 269 to 270, and Asn292; these read DL and DA. Residues 374–426 are disordered; the sequence is RISFKMPTLKKRKDTENNDDQENNNNSSNNNNNNKIDYNEAVSSGGEGKKIKH. Low complexity predominate over residues 396–407; it reads NNNNSSNNNNNN.

It belongs to the class I-like SAM-binding methyltransferase superfamily. TRM5/TYW2 family. As to quaternary structure, monomer.

It is found in the mitochondrion matrix. It localises to the nucleus. The protein localises to the cytoplasm. The enzyme catalyses guanosine(37) in tRNA + S-adenosyl-L-methionine = N(1)-methylguanosine(37) in tRNA + S-adenosyl-L-homocysteine + H(+). Functionally, specifically methylates the N1 position of guanosine-37 in various cytoplasmic and mitochondrial tRNAs. Methylation is not dependent on the nature of the nucleoside 5' of the target nucleoside. This is the first step in the biosynthesis of wybutosine (yW), a modified base adjacent to the anticodon of tRNAs and required for accurate decoding. This Heterostelium pallidum (strain ATCC 26659 / Pp 5 / PN500) (Cellular slime mold) protein is tRNA (guanine(37)-N(1))-methyltransferase (trmt5).